We begin with the raw amino-acid sequence, 311 residues long: MQDLAKPKIKIKSPAKINLHLEVIGKREDGFHELAMIMQNIDLSDYLEFEINNEGLIKLESDCNDLSLSDDNLIVKSANLLRKNSNINYGANIFLRKNIPIGAGLAGGSSNAAATLIGLNKLWNLDLDHGTLCSLASTLGSDIPFFINGGIQLCFGRGEILEKLDSNFEYGVILLKNPNVSVSTAETYKKYSNRFCDNHLNDRKMIENIRKNLRDNGLNKLNFDNQHLFIKNDLQLVVENENDSVKQALYLLSKLENCLTFSMSGSGPTCFALFKDIETAKKELTANSKFFKDKGYDSWVCTFLEKGITFI.

Lys16 is a catalytic residue. Residue 100 to 110 (PIGAGLAGGSS) coordinates ATP. Asp142 is an active-site residue.

The protein belongs to the GHMP kinase family. IspE subfamily.

It carries out the reaction 4-CDP-2-C-methyl-D-erythritol + ATP = 4-CDP-2-C-methyl-D-erythritol 2-phosphate + ADP + H(+). The protein operates within isoprenoid biosynthesis; isopentenyl diphosphate biosynthesis via DXP pathway; isopentenyl diphosphate from 1-deoxy-D-xylulose 5-phosphate: step 3/6. Functionally, catalyzes the phosphorylation of the position 2 hydroxy group of 4-diphosphocytidyl-2C-methyl-D-erythritol. In Prochlorococcus marinus (strain MIT 9301), this protein is 4-diphosphocytidyl-2-C-methyl-D-erythritol kinase.